A 215-amino-acid polypeptide reads, in one-letter code: Chaperone protein TorD (215 aa).

This sequence belongs to the TorD/DmsD family. TorD subfamily.

It is found in the cytoplasm. Involved in the biogenesis of TorA. Acts on TorA before the insertion of the molybdenum cofactor and, as a result, probably favors a conformation of the apoenzyme that is competent for acquiring the cofactor. The polypeptide is Chaperone protein TorD (Vibrio atlanticus (strain LGP32) (Vibrio splendidus (strain Mel32))).